A 511-amino-acid polypeptide reads, in one-letter code: MKEKFAALIIMDGLGIAPASDSNSVTLADTTYLDNLLKEYPNSTLVTSGEAVGLPEGQMGNSEVGHLNLGAGRIVWQSLSRINVAIKDGSFFKNQAFLDAVAHAKKHNSKLHIMGLVSDGGVHAQMGHYLALYDFAKQQNILDRTYLHVFTDGRDTPQESGYGFVKTLVDYGFNVATVSGRFYAMDRDNNWDRVQLAFDAMTLGDGPHFNSALDGIESSYKSGIQDEFIKPFIVNDKGLIENDDAVIFANFRPDRAIRIATALSNPSAAKTIYTEGKPMLNVSKAPKNIFLVSMMHYKETVKGPLAFELQTFDDLYGEVIEKNGFKQIRAAETEKYPHVTFFFDGGKEVPLANSTRILAESPKVPTYDLKPEMSAYELTDKVIAALKTGEYQTMILNFANPDMVGHTGNIEATKKAVEVTVECVGKVTDFIINELGGVAIILADHGNAEQMRDQEGKPHTAHTTNLVPVVVTKKGIKLNSGALCDVAPTLLDLLGIEKPKAMTGTSLIEKI.

The Mn(2+) site is built by aspartate 12 and serine 62. Serine 62 acts as the Phosphoserine intermediate in catalysis. Residues histidine 123, 154–155 (RD), arginine 181, arginine 187, 252–255 (RPDR), and lysine 335 each bind substrate. 5 residues coordinate Mn(2+): aspartate 402, histidine 406, aspartate 444, histidine 445, and histidine 462.

It belongs to the BPG-independent phosphoglycerate mutase family. As to quaternary structure, monomer. Mn(2+) serves as cofactor.

It carries out the reaction (2R)-2-phosphoglycerate = (2R)-3-phosphoglycerate. The protein operates within carbohydrate degradation; glycolysis; pyruvate from D-glyceraldehyde 3-phosphate: step 3/5. In terms of biological role, catalyzes the interconversion of 2-phosphoglycerate and 3-phosphoglycerate. The polypeptide is 2,3-bisphosphoglycerate-independent phosphoglycerate mutase (Acholeplasma laidlawii (strain PG-8A)).